A 265-amino-acid polypeptide reads, in one-letter code: Molybdenum-pterin-binding protein MopA (265 aa).

2 Mop domains span residues Arg126 to Ala192 and Arg198 to Met264.

This sequence belongs to the ModE family.

This chain is Molybdenum-pterin-binding protein MopA (mopA), found in Rhodobacter capsulatus (Rhodopseudomonas capsulata).